A 108-amino-acid chain; its full sequence is uncharacterized protein (108 aa).

Positions 1-22 (MMIKQCVICLSLLVFGTTAAHA) are cleaved as a signal peptide.

This is an uncharacterized protein from Bacillus subtilis (strain 168).